A 615-amino-acid polypeptide reads, in one-letter code: MSASTKRKRDQAEESVPAENPASTDVEKAIKPAQKQEEETSFVDLGLDPRLLQAIAQQKFAKPTLVQRKAIPLALNGQDVLAKADCGSGKTAAYVLPLLSSILKRKATDSTAFTTALILVPTRELADQVSKAIEQFASFCAKDISTAKLTDKVSSKVQRALLSNSPDIVISTPSTAWQNVNSSALSIDKLTHLILDEADLVLSYGYSEDLENLSRSVPKGVQVMMMSATLSDEVDTLKGIFRRDPTLLDLKEKEAEGEGITQFVAKCGEDEKFLLAYVIFKLKLIKGKCIIFVSDIDRCYRLKLFFEQFGIRSCILNSELPLNSRVHVVEEFNRHVYDIIIAADEKNEMLGDDEEPAETAEAQDDAKKSNEGDDAETEAKRPKKKAKKSKGGDKEYGVSRGVDFKKVSAVINFDLPTTASAYTHRIGRTARAGQTGMALSFVVPKDLYRKHMPTSTPACENDEKIMARIIRQQAKRDKEVKPYNFNMKQVDPFRYRMNDALRAVTKVAIREARTRELRQELLKSEKLKRYFEENPTELSHLRHDGELRTARQQAHLKHIPEYLMPKDGKQALTEDVGFVAMRKDKKGKGKKGRGFKVGSRKRDPLKTFKARRKTK.

Residues 1-37 (MSASTKRKRDQAEESVPAENPASTDVEKAIKPAQKQE) form a disordered region. Residues 25–37 (DVEKAIKPAQKQE) show a composition bias toward basic and acidic residues. The Q motif signature appears at 40–68 (TSFVDLGLDPRLLQAIAQQKFAKPTLVQR). The Helicase ATP-binding domain maps to 71 to 248 (IPLALNGQDV…GIFRRDPTLL (178 aa)). An ATP-binding site is contributed by 84–91 (ADCGSGKT). The DEAD box motif lies at 196-199 (DEAD). The Helicase C-terminal domain occupies 259–491 (GITQFVAKCG…PYNFNMKQVD (233 aa)). A compositionally biased stretch (acidic residues) spans 351–363 (GDDEEPAETAEAQ). 2 disordered regions span residues 351 to 396 (GDDE…DKEY) and 583 to 615 (KDKK…RKTK). Basic residues predominate over residues 583 to 594 (KDKKGKGKKGRG).

The protein belongs to the DEAD box helicase family. DDX56/DBP9 subfamily.

The protein localises to the nucleus. Its subcellular location is the nucleolus. The catalysed reaction is ATP + H2O = ADP + phosphate + H(+). Its function is as follows. ATP-binding RNA helicase involved in the biogenesis of 60S ribosomal subunits and is required for the normal formation of 25S and 5.8S rRNAs. The chain is ATP-dependent RNA helicase DBP9 (DBP9) from Gibberella zeae (strain ATCC MYA-4620 / CBS 123657 / FGSC 9075 / NRRL 31084 / PH-1) (Wheat head blight fungus).